Here is a 261-residue protein sequence, read N- to C-terminus: Probable glutathione-independent glyoxalase hsp3103 (261 aa).

Catalysis depends on residues cysteine 162, histidine 163, and glutamate 196.

Belongs to the peptidase C56 family. HSP31-like subfamily.

It catalyses the reaction methylglyoxal + H2O = (R)-lactate + H(+). Catalyzes the conversion of methylglyoxal (MG) to D-lactate in a single glutathione (GSH)-independent step. May play a role in detoxifying endogenously produced glyoxals. Involved in protection against reactive oxygen species (ROS). This is Probable glutathione-independent glyoxalase hsp3103 from Schizosaccharomyces pombe (strain 972 / ATCC 24843) (Fission yeast).